Reading from the N-terminus, the 177-residue chain is Putative HTH-type transcriptional regulator YvaV (177 aa).

Positions 49–73 (LTELSEATGMSKTRMSQVVREMLDA) form a DNA-binding region, H-T-H motif.

It belongs to the GbsR family.

This is Putative HTH-type transcriptional regulator YvaV (yvaV) from Bacillus subtilis (strain 168).